The sequence spans 370 residues: Germination protease (370 aa).

Positions 1–15 (MEKELDLSQYSVRTD) are excised as a propeptide.

The protein belongs to the peptidase A25 family. In terms of assembly, homotetramer. In terms of processing, autoproteolytically processed. The inactive tetrameric zymogen termed p46 autoprocesses to a smaller form termed p41, which is active only during spore germination.

It carries out the reaction Endopeptidase action with P4 Glu or Asp, P1 preferably Glu &gt; Asp, P1' hydrophobic and P2' Ala.. In terms of biological role, initiates the rapid degradation of small, acid-soluble proteins during spore germination. The sequence is that of Germination protease (gpr) from Priestia megaterium (strain ATCC 12872 / QMB1551) (Bacillus megaterium).